Reading from the N-terminus, the 85-residue chain is Putative membrane protein insertion efficiency factor (85 aa).

The interval 66–85 (PLNSGGDDPVPPKLDDNREH) is disordered.

Belongs to the UPF0161 family.

Its subcellular location is the cell inner membrane. Functionally, could be involved in insertion of integral membrane proteins into the membrane. The chain is Putative membrane protein insertion efficiency factor from Yersinia pestis bv. Antiqua (strain Antiqua).